Consider the following 293-residue polypeptide: MGAALSDTNYAVIYDLHSHTTASDGLLTPETLVHRAVEMRVGTLAITDHDTTAAIPAAREEISRSGLALNLIPGVEISTVWENHEIHIVGLNIDIAHPAMRDFLAQQTERRQARGRLIAERLEKAHIPGAWEGALRLANGGAVTRGHFARFLVECGKAATMADVFKKYLARGKTGYVPPQWCTIEQAIDVIHHSGGKAVLAHPGRYDLSAKWLKRLVAHFADHHGDAMEVAQCQQSPNERTQLATLARQHHLWASLGSDFHQPCPWIELGRKLWLPAGVEGVWQTWEQPQISQ.

The Mn(2+) site is built by histidine 17, histidine 19, aspartate 24, histidine 49, glutamate 76, histidine 87, histidine 202, aspartate 259, and histidine 261.

The protein belongs to the PHP family. TrpH/YciV subfamily. Mn(2+) is required as a cofactor.

The enzyme catalyses a ribonucleoside 3',5'-bisphosphate + H2O = a ribonucleoside 5'-phosphate + phosphate. Functionally, exoribonuclease that catalyzes the last steps of 5S, 16S and 23S rRNA 5'-end maturation. Removes 3 nucleotides (nt) from the 5' end of 5S, 16S and 23S rRNA precursors to generate the mature 5' ends. 5S and 23S rRNA maturation occurs more efficiently and accurately on ribosomal particles as compared to free RNA. Efficiently catalyzes the hydrolysis of the 3'-phosphate from 3',5'-bis-phosphonucleotides as well as the successive hydrolysis of 5'-phosphomononucleotides from the 5'-end of short pieces of RNA and DNA, with no specificity toward the identity of the nucleotide base. Is more efficient at hydrolyzing RNA oligonucleotides than DNA oligonucleotides. This enzyme can also hydrolyze annealed DNA duplexes, albeit at a catalytic efficiency lower than that of the corresponding single-stranded oligonucleotides. The chain is 5'-3' exoribonuclease Rnm from Salmonella typhimurium (strain LT2 / SGSC1412 / ATCC 700720).